The sequence spans 466 residues: Ribulose bisphosphate carboxylase large chain (466 aa).

Lys5 is modified (N6,N6,N6-trimethyllysine). Residues Asn114 and Thr164 each contribute to the substrate site. Lys166 (proton acceptor) is an active-site residue. Lys168 is a binding site for substrate. Residues Lys192, Asp194, and Glu195 each coordinate Mg(2+). An N6-carboxylysine modification is found at Lys192. The active-site Proton acceptor is His285. Residues Arg286, His318, and Ser370 each contribute to the substrate site.

This sequence belongs to the RuBisCO large chain family. Type I subfamily. Heterohexadecamer of 8 large chains and 8 small chains; disulfide-linked. The disulfide link is formed within the large subunit homodimers. Requires Mg(2+) as cofactor. In terms of processing, the disulfide bond which can form in the large chain dimeric partners within the hexadecamer appears to be associated with oxidative stress and protein turnover.

It is found in the plastid. The protein localises to the chloroplast. It carries out the reaction 2 (2R)-3-phosphoglycerate + 2 H(+) = D-ribulose 1,5-bisphosphate + CO2 + H2O. It catalyses the reaction D-ribulose 1,5-bisphosphate + O2 = 2-phosphoglycolate + (2R)-3-phosphoglycerate + 2 H(+). RuBisCO catalyzes two reactions: the carboxylation of D-ribulose 1,5-bisphosphate, the primary event in carbon dioxide fixation, as well as the oxidative fragmentation of the pentose substrate in the photorespiration process. Both reactions occur simultaneously and in competition at the same active site. This is Ribulose bisphosphate carboxylase large chain from Coriaria myrtifolia (Tanner's sumac).